The primary structure comprises 231 residues: Septum site-determining protein MinC (231 aa).

The protein belongs to the MinC family. Interacts with MinD and FtsZ.

Functionally, cell division inhibitor that blocks the formation of polar Z ring septums. Rapidly oscillates between the poles of the cell to destabilize FtsZ filaments that have formed before they mature into polar Z rings. Prevents FtsZ polymerization. This chain is Septum site-determining protein MinC, found in Shigella flexneri.